Here is a 646-residue protein sequence, read N- to C-terminus: MSGNDEEFNDEFLLAIDSIETTLKKADMYRPLPPPYLPTFLPAPPPSTKISSSLSHPMQLQSSAGQQRKQIQVPDPFLSYSPPRELSQRVVSGFNDALMDYSNSTVVTAAKPISPTTSNRRCDSEKDLEIDRLKKELERVSKQLLDVEQECSQLKKGKSKETESRNLCADDNRGQCSTVHASKRIDLEPDVATSSVNHRENDSRMALDDKRSFKTTGVQADVANHSDLSKKLLDIWRTSNYQDPRKNLISELLLACSTDLQILFSFMKISTPPQELNKQEAKTSSDRQSSKALESEKVYQLYSAVTKISYGFVNLKTLVEPLLDLCKAETAVLVHRSLRVLHVLLEHICGDEKRFEASWDANWHSLFKLMNQIASKRTEQDVKQEALSIMNIIVMSTDAYTARESFVSKEVFESISLLLRKEGGLHVRKEAIHLFYLLLNCPKLYDTFDSLHEEKNSSDTENDSEGNFFALEAFGKIFEGLADCLTSPRKTSEDLELCRNVIMILALAASSGNSGYELLSSHKLPQDSSFLMLILHLLVAEIDSESTEFHPKAEIFKARTLLMREILILLNRLVSGLSSSATILKELTTSRDMASLTVDAATRLSRKRNLLGKPESSVERMRNTEIMDLARIFKKRVFAFLGDNTI.

Residues 42-70 (PAPPPSTKISSSLSHPMQLQSSAGQQRKQ) form a disordered region. Residues 48–70 (TKISSSLSHPMQLQSSAGQQRKQ) show a composition bias toward polar residues. The short motif at 119 to 126 (NRRCDSEK) is the Nuclear localization signal element. Residues 123-157 (DSEKDLEIDRLKKELERVSKQLLDVEQECSQLKKG) are a coiled coil. The Phosphatase tensin-type domain maps to 376-646 (KRTEQDVKQE…VFAFLGDNTI (271 aa)).

This sequence belongs to the serpin family. As to quaternary structure, forms multimers through the coiled-coil domain. Post-translationally, probably phosphorylated by ATR. As to expression, accumulates throughout the root tip.

It localises to the nucleus. Its subcellular location is the cytoplasm. Required for tolerance to DNA-damaging and cross-linking agents such as UVB irradiation, gamma-radiation, aphidicolin, ionizing radiation and hydroxyurea (HU), cisplatin (CDDP) and mitomycin C (MMC). Involved in cell-cycle G2/M arrest in response to DNA damage. Required for aluminum-dependent gene regulation and root growth inhibition in an ATR-dependent manner by halting cell cycle progression and triggering loss of the quiescent center (QC). The polypeptide is Protein SENSITIVE TO UV 2 (Arabidopsis thaliana (Mouse-ear cress)).